The following is a 211-amino-acid chain: MPNKPKGLLIVVTGPSAVGKGTICRALLAETPGIRFSVSCTTRPKRPGEVDGVEYYFISKEEFERRIAAGEFLEWAEVYGNYYGTPRGYVEEVTAQGQDVILDIDRVGARAVREQYPDAVSVFVIPPSMEALRQRIAARGTESPEAVARRLAEAPEWIREGLTYDYVIVNDDLARAVAELRAIIMAEKARTVRNGAALIETLLEKGALTDE.

Residues 7–185 (GLLIVVTGPS…AVAELRAIIM (179 aa)) form the Guanylate kinase-like domain. ATP is bound at residue 14 to 21 (GPSAVGKG).

It belongs to the guanylate kinase family.

The protein localises to the cytoplasm. It carries out the reaction GMP + ATP = GDP + ADP. Its function is as follows. Essential for recycling GMP and indirectly, cGMP. In Symbiobacterium thermophilum (strain DSM 24528 / JCM 14929 / IAM 14863 / T), this protein is Guanylate kinase.